The primary structure comprises 335 residues: Endo-beta-N-acetylglucosaminidase F2 (335 aa).

The first 45 residues, 1–45 (MKTANFSFALCLSVVIMLFIKCTRSEQDLSVTKDAIAQKSGVTVS), serve as a signal peptide directing secretion. A GH18 domain is found at 61-321 (QISAGYYRTW…SSNDNTLRAP (261 aa)). 3 O-linked (Man...) serine glycosylation sites follow: Ser73, Ser89, and Ser143. The Proton donor role is filled by Glu171.

It belongs to the glycosyl hydrolase 18 family. In terms of assembly, monomer. Carbohydrates at Ser-73, Ser-89 and Ser-143 consist of (2-OMe)Man1-4GlcNAcU1-4GlcU1-4Glc1-4(2-OMe)GlcU1-4[(2-OMe)Rham1-2]Man.

The protein localises to the secreted. It carries out the reaction an N(4)-(oligosaccharide-(1-&gt;3)-[oligosaccharide-(1-&gt;6)]-beta-D-Man-(1-&gt;4)-beta-D-GlcNAc-(1-&gt;4)-alpha-D-GlcNAc)-L-asparaginyl-[protein] + H2O = an oligosaccharide-(1-&gt;3)-[oligosaccharide-(1-&gt;6)]-beta-D-Man-(1-&gt;4)-D-GlcNAc + N(4)-(N-acetyl-beta-D-glucosaminyl)-L-asparaginyl-[protein]. Its function is as follows. Endohydrolysis of the di-N-acetylchitobiosyl unit in high-mannose glycopeptides and glycoproteins. Complex biantennary glycans are the preferred substrates. Tri- and tetraantennary glycans are not hydrolyzed, and high mannose glycans are very poor substrates. The sequence is that of Endo-beta-N-acetylglucosaminidase F2 (endOF2) from Elizabethkingia meningoseptica (Chryseobacterium meningosepticum).